We begin with the raw amino-acid sequence, 102 residues long: MIPGEVITPETDIELNVGRETLKVVVANLGDRPIQVGSHFHFYEANDALQFDREAVKGFRLNIAAGTAIRFEPGQSREVEIVALAGKREVYGFAGRVMGKLD.

This sequence belongs to the urease beta subunit family. In terms of assembly, heterotrimer of UreA (gamma), UreB (beta) and UreC (alpha) subunits. Three heterotrimers associate to form the active enzyme.

It is found in the cytoplasm. It catalyses the reaction urea + 2 H2O + H(+) = hydrogencarbonate + 2 NH4(+). It functions in the pathway nitrogen metabolism; urea degradation; CO(2) and NH(3) from urea (urease route): step 1/1. The sequence is that of Urease subunit beta from Acinetobacter baumannii (strain AB307-0294).